Here is a 233-residue protein sequence, read N- to C-terminus: Leucyl/phenylalanyl-tRNA--protein transferase (233 aa).

It belongs to the L/F-transferase family.

It is found in the cytoplasm. The catalysed reaction is N-terminal L-lysyl-[protein] + L-leucyl-tRNA(Leu) = N-terminal L-leucyl-L-lysyl-[protein] + tRNA(Leu) + H(+). It carries out the reaction N-terminal L-arginyl-[protein] + L-leucyl-tRNA(Leu) = N-terminal L-leucyl-L-arginyl-[protein] + tRNA(Leu) + H(+). The enzyme catalyses L-phenylalanyl-tRNA(Phe) + an N-terminal L-alpha-aminoacyl-[protein] = an N-terminal L-phenylalanyl-L-alpha-aminoacyl-[protein] + tRNA(Phe). Functions in the N-end rule pathway of protein degradation where it conjugates Leu, Phe and, less efficiently, Met from aminoacyl-tRNAs to the N-termini of proteins containing an N-terminal arginine or lysine. This Shewanella denitrificans (strain OS217 / ATCC BAA-1090 / DSM 15013) protein is Leucyl/phenylalanyl-tRNA--protein transferase.